The following is a 794-amino-acid chain: Glutamine--tRNA ligase (794 aa).

Residues 192–217 (DNEKPKKKKEKPAKVEDKAAPVATSE) are disordered. Positions 277–287 (PEPNGYLHIGH) match the 'HIGH' region motif. Residues 278–280 (EPN) and 284–290 (HIGHAKA) contribute to the ATP site. Residues D310 and Y450 each contribute to the L-glutamine site. Residues T469, 498–499 (RL), and 506–508 (MSK) each bind ATP. The short motif at 505–509 (VMSKR) is the 'KMSKS' region element.

The protein belongs to the class-I aminoacyl-tRNA synthetase family.

The enzyme catalyses tRNA(Gln) + L-glutamine + ATP = L-glutaminyl-tRNA(Gln) + AMP + diphosphate. This is Glutamine--tRNA ligase from Lupinus luteus (European yellow lupine).